The chain runs to 308 residues: ADP-L-glycero-D-manno-heptose-6-epimerase (308 aa).

Residues 10–11, 31–32, Lys38, Lys53, 75–79, and Asn92 contribute to the NADP(+) site; these read FI, DN, and EGACS. Tyr139 (proton acceptor) is an active-site residue. An NADP(+)-binding site is contributed by Lys143. A substrate-binding site is contributed by Asn168. Residues Val169 and Lys177 each contribute to the NADP(+) site. The active-site Proton acceptor is the Lys177. Residues Ser179, His186, 200-203, Arg208, and Tyr271 contribute to the substrate site; that span reads FAGS.

This sequence belongs to the NAD(P)-dependent epimerase/dehydratase family. HldD subfamily. In terms of assembly, homopentamer. NADP(+) serves as cofactor.

It catalyses the reaction ADP-D-glycero-beta-D-manno-heptose = ADP-L-glycero-beta-D-manno-heptose. It functions in the pathway nucleotide-sugar biosynthesis; ADP-L-glycero-beta-D-manno-heptose biosynthesis; ADP-L-glycero-beta-D-manno-heptose from D-glycero-beta-D-manno-heptose 7-phosphate: step 4/4. In terms of biological role, catalyzes the interconversion between ADP-D-glycero-beta-D-manno-heptose and ADP-L-glycero-beta-D-manno-heptose via an epimerization at carbon 6 of the heptose. The protein is ADP-L-glycero-D-manno-heptose-6-epimerase of Haemophilus influenzae (strain 86-028NP).